An 855-amino-acid polypeptide reads, in one-letter code: uncharacterized protein (855 aa).

The next 10 helical transmembrane spans lie at 24–44 (PFQYILLVLGIALGVAMIVAI), 256–276 (AFTVNLTALSLIALLVGIFLI), 318–338 (IGTGLGLLIGIWLGEGLIGLV), 361–381 (LLKGLIIGIFAAMLATLPPAI), 404–424 (LMPWLWVAWFGLGSFGVLMLW), 430–450 (LVVAFVGLFSVLIALALIAPP), 487–507 (IAIAALMMAVSLMVGVSISVG), 725–745 (ITIALQLVATVVAFIGVLSAL), 780–800 (MGGMAGLMALPTGCILAWILV), and 821–841 (FLRALLVAVVAALAAGMYPAW).

This sequence belongs to the ABC-4 integral membrane protein family. The complex is probably composed of two ATP-binding proteins (Rv0986) and two transmembrane proteins (Rv0987).

It localises to the cell membrane. In terms of biological role, probably part of an ABC transporter complex involved in host cell binding either through secretion of an adherence factor or through maintaining the architecture and integrity of the mycobacterial cell envelope. Could be required for host endothelial-cell invasion and/or intracellular survival. This is an uncharacterized protein from Mycobacterium tuberculosis (strain ATCC 25618 / H37Rv).